The sequence spans 132 residues: Dinoflagellate viral nucleoprotein 5 (132 aa).

Over residues 1–44 the composition is skewed to basic residues; it reads MAAMKKAMKVKKSAKKSAKKSGKKGGMKKKAKRVSKVARGKRAK. The tract at residues 1 to 84 is disordered; that stretch reads MAAMKKAMKV…KKQSEHGKKI (84 aa). The segment covering 57–66 has biased composition (polar residues); it reads GGLTKNSLVK.

Post-translationally, phosphorylated.

The protein resides in the nucleus. It localises to the chromosome. In terms of biological role, DNA-binding protein, which similarly to histones, may compact DNA into chromatin. This chain is Dinoflagellate viral nucleoprotein 5, found in Hematodinium sp.